Consider the following 547-residue polypeptide: Beta,beta-carotene 15,15'-dioxygenase (547 aa).

Fe cation is bound by residues His172, His237, His308, and His514. Positions Gln528–Asp540 are enriched in basic and acidic residues. The interval Gln528–Thr547 is disordered.

The protein belongs to the carotenoid oxygenase family. Fe(2+) serves as cofactor. Highly expressed in retinal pigment epithelium. Also expressed in kidney, testis, liver, brain, small intestine and colon.

The protein localises to the cytoplasm. It is found in the cytosol. It carries out the reaction all-trans-beta-carotene + O2 = 2 all-trans-retinal. Its pathway is cofactor metabolism; retinol metabolism. Functionally, symmetrically cleaves beta-carotene into two molecules of retinal using a dioxygenase mechanism. The protein is Beta,beta-carotene 15,15'-dioxygenase of Homo sapiens (Human).